The chain runs to 265 residues: S-adenosylmethionine decarboxylase proenzyme (265 aa).

The active-site Schiff-base intermediate with substrate; via pyruvic acid is serine 114. The residue at position 114 (serine 114) is a Pyruvic acid (Ser); by autocatalysis. Histidine 119 (proton acceptor; for processing activity) is an active-site residue. Catalysis depends on cysteine 142, which acts as the Proton donor; for catalytic activity.

It belongs to the prokaryotic AdoMetDC family. Type 2 subfamily. In terms of assembly, heterooctamer of four alpha and four beta chains arranged as a tetramer of alpha/beta heterodimers. It depends on pyruvate as a cofactor. Is synthesized initially as an inactive proenzyme. Formation of the active enzyme involves a self-maturation process in which the active site pyruvoyl group is generated from an internal serine residue via an autocatalytic post-translational modification. Two non-identical subunits are generated from the proenzyme in this reaction, and the pyruvate is formed at the N-terminus of the alpha chain, which is derived from the carboxyl end of the proenzyme. The post-translation cleavage follows an unusual pathway, termed non-hydrolytic serinolysis, in which the side chain hydroxyl group of the serine supplies its oxygen atom to form the C-terminus of the beta chain, while the remainder of the serine residue undergoes an oxidative deamination to produce ammonia and the pyruvoyl group blocking the N-terminus of the alpha chain.

It carries out the reaction S-adenosyl-L-methionine + H(+) = S-adenosyl 3-(methylsulfanyl)propylamine + CO2. The protein operates within amine and polyamine biosynthesis; S-adenosylmethioninamine biosynthesis; S-adenosylmethioninamine from S-adenosyl-L-methionine: step 1/1. Its function is as follows. Catalyzes the decarboxylation of S-adenosylmethionine to S-adenosylmethioninamine (dcAdoMet), the propylamine donor required for the synthesis of the polyamines spermine and spermidine from the diamine putrescine. In Buchnera aphidicola subsp. Acyrthosiphon pisum (strain APS) (Acyrthosiphon pisum symbiotic bacterium), this protein is S-adenosylmethionine decarboxylase proenzyme.